The chain runs to 336 residues: tRNA dimethylallyltransferase (336 aa).

Residue 19–26 participates in ATP binding; that stretch reads GPTASGKT. Residue 21-26 participates in substrate binding; it reads TASGKT.

This sequence belongs to the IPP transferase family. Monomer. Mg(2+) serves as cofactor.

It carries out the reaction adenosine(37) in tRNA + dimethylallyl diphosphate = N(6)-dimethylallyladenosine(37) in tRNA + diphosphate. Functionally, catalyzes the transfer of a dimethylallyl group onto the adenine at position 37 in tRNAs that read codons beginning with uridine, leading to the formation of N6-(dimethylallyl)adenosine (i(6)A). This chain is tRNA dimethylallyltransferase, found in Bifidobacterium adolescentis (strain ATCC 15703 / DSM 20083 / NCTC 11814 / E194a).